The sequence spans 182 residues: Large ribosomal subunit protein bL25 (182 aa).

It belongs to the bacterial ribosomal protein bL25 family. CTC subfamily. Part of the 50S ribosomal subunit; part of the 5S rRNA/L5/L18/L25 subcomplex. Contacts the 5S rRNA. Binds to the 5S rRNA independently of L5 and L18.

In terms of biological role, this is one of the proteins that binds to the 5S RNA in the ribosome where it forms part of the central protuberance. In Borreliella burgdorferi (strain ATCC 35210 / DSM 4680 / CIP 102532 / B31) (Borrelia burgdorferi), this protein is Large ribosomal subunit protein bL25.